The chain runs to 342 residues: Phosphate acyltransferase (342 aa).

Belongs to the PlsX family. As to quaternary structure, homodimer. Probably interacts with PlsY.

It localises to the cytoplasm. It carries out the reaction a fatty acyl-[ACP] + phosphate = an acyl phosphate + holo-[ACP]. It functions in the pathway lipid metabolism; phospholipid metabolism. Catalyzes the reversible formation of acyl-phosphate (acyl-PO(4)) from acyl-[acyl-carrier-protein] (acyl-ACP). This enzyme utilizes acyl-ACP as fatty acyl donor, but not acyl-CoA. This chain is Phosphate acyltransferase, found in Shewanella sp. (strain MR-4).